We begin with the raw amino-acid sequence, 454 residues long: COBRA-like protein 6 (454 aa).

Positions 1–24 (MGAMLNLLLVVTVILCSILSPTRF) are cleaved as a signal peptide. N-linked (GlcNAc...) asparagine glycosylation is found at Asn104, Asn191, Asn320, Asn355, and Asn391. Ser429 carries GPI-anchor amidated serine lipidation. A propeptide spans 430–454 (SSSSAVISSVSVVFCFLLHHLLLLV) (removed in mature form).

It belongs to the COBRA family. In terms of tissue distribution, expressed in flowers and siliques.

The protein localises to the cell membrane. In Arabidopsis thaliana (Mouse-ear cress), this protein is COBRA-like protein 6 (COBL6).